A 210-amino-acid polypeptide reads, in one-letter code: Inner membrane-spanning protein YciB (210 aa).

6 helical membrane-spanning segments follow: residues 19-39 (LVLE…GDWL), 53-73 (IFIA…VSWI), 78-98 (LPMM…LTLW), 115-135 (LFGA…GYVF), 148-168 (KLTI…EIVW), and 175-195 (FWVA…TLAQ).

It belongs to the YciB family.

The protein localises to the cell inner membrane. Functionally, plays a role in cell envelope biogenesis, maintenance of cell envelope integrity and membrane homeostasis. The polypeptide is Inner membrane-spanning protein YciB (Sinorhizobium fredii (strain NBRC 101917 / NGR234)).